We begin with the raw amino-acid sequence, 326 residues long: Polyprenal reductase (326 aa).

The next 5 helical transmembrane spans lie at 26 to 46 (MMFGTFIATIVFFGGLMTFVE), 84 to 104 (HFYTFALFWSWLAFYVLVSTV), 167 to 187 (INLSHYAVGYVHYFGAVIALL), 212 to 232 (ILYLGVFFLAWQQQYASNMIL), and 256 to 276 (LFNLLSSPHMFLEVVMYFCIA).

Belongs to the steroid 5-alpha reductase family. Polyprenal reductase subfamily.

Its subcellular location is the endoplasmic reticulum membrane. The catalysed reaction is a di-trans,poly-cis-dolichal + NADP(+) = a di-trans,poly-cis-polyprenal + NADPH + H(+). Its pathway is protein modification; protein glycosylation. Functionally, plays a key role in early steps of protein N-linked glycosylation by being involved in the conversion of polyprenol into dolichol. Acts as a polyprenal reductase that mediates the reduction of polyprenal into dolichal in a NADP-dependent mechanism. Dolichols are required for the synthesis of dolichol-linked monosaccharides and the oligosaccharide precursor used for N-glycosylation. The protein is Polyprenal reductase of Drosophila melanogaster (Fruit fly).